Here is a 434-residue protein sequence, read N- to C-terminus: Serine protease HTRA2, mitochondrial (434 aa).

The segment at 34–65 is disordered; sequence YSNNTANITTDSSSSSNNNSNRNNKNDNNNED. Low complexity predominate over residues 35–60; that stretch reads SNNTANITTDSSSSSNNNSNRNNKND. The chain crosses the membrane as a helical span at residues 74 to 92; that stretch reads LVRFFVPFSLGAVASSLVM. The IAP-binding signature appears at 85 to 88; it reads AVAS. Residues 151–314 are serine protease; it reads SNGSGFVIEQ…IPIDYVKVFL (164 aa). Catalysis depends on charge relay system residues H169, D201, and S278. Positions 337–424 constitute a PDZ domain; the sequence is MGITMLTLTP…NMIIMRGVKQ (88 aa).

It belongs to the peptidase S1C family. Interacts with th/DIAP1 (via BIR 2 domain).

It localises to the mitochondrion intermembrane space. Its subcellular location is the mitochondrion membrane. It carries out the reaction Cleavage of non-polar aliphatic amino-acids at the P1 position, with a preference for Val, Ile and Met. At the P2 and P3 positions, Arg is selected most strongly with a secondary preference for other hydrophilic residues.. Its function is as follows. Serine protease that shows proteolytic activity against a non-specific substrate beta-casein. Promotes or induces cell death either by direct binding to and inhibition of BIRC proteins (also called inhibitor of apoptosis proteins, IAPs), leading to an increase in caspase activity, or by a BIRC inhibition-independent, caspase-independent and serine protease activity-dependent mechanism. Can antagonize antiapoptotic activity of th/Diap1 by directly inducing the degradation of th/Diap1. In Drosophila willistoni (Fruit fly), this protein is Serine protease HTRA2, mitochondrial.